The sequence spans 577 residues: Polyadenylate-binding protein, cytoplasmic and nuclear (577 aa).

The segment covering 1–10 has biased composition (basic and acidic residues); that stretch reads MADITDKTAE. A disordered region spans residues 1–36; sequence MADITDKTAEQLENLNIQDDQKQAATGSESQSVENS. Alanine 2 carries the N-acetylalanine modification. Residue lysine 7 forms a Glycyl lysine isopeptide (Lys-Gly) (interchain with G-Cter in ubiquitin) linkage. The tract at residues 9–61 is required and sufficient for nuclear export; it reads AEQLENLNIQDDQKQAATGSESQSVENSSASLYVGDLEPSVSEAHLYDIFSPI. The segment covering 11-27 has biased composition (polar residues); it reads QLENLNIQDDQKQAATG. Residues 12-17 carry the Nuclear export signal motif; that stretch reads LENLNI. RRM domains lie at 38–116, 126–203, 219–296, and 322–399; these read ASLY…WSQR, GNIF…PHLS, TNLY…RAQK, and VNLF…IAQR. Arginine 107 is subject to Omega-N-methylarginine. Residue serine 249 is modified to Phosphoserine. Positions 281 to 317 are required and sufficient for nuclear import; it reads DSELNGEKLYVGRAQKKNERMHVLKKQYEAYRLEKMA. Phosphoserine is present on serine 332. A Glycyl lysine isopeptide (Lys-Gly) (interchain with G-Cter in ubiquitin) cross-link involves residue lysine 337. Position 405 is a phosphoserine (serine 405). The tract at residues 473–577 is interaction with SUP35; it reads PPQFRNGPVY…KEQEQQTEQA (105 aa). The PABC domain occupies 489–568; the sequence is GFPRNANDNN…ASAAYESFKK (80 aa).

The protein belongs to the polyadenylate-binding protein type-1 family. In terms of assembly, binds to poly(A) mRNA to form a periodic structure with a packing density of one molecule per 25 adenylate residues. Interacts with the nuclear export factor CRM1 and with the importin SXM1. Interacts with RNA15, a component of the cleavage factor IA (CFIA) complex. Interacts with translation initiation factor eIF4G (TIF4631 or TIF4632) and release factor eRF3 (SUP35). Interacts with the PAB-dependent poly(A)-nuclease (PAN) complex regulatory subunit PAN3. Interacts with ARF1, DCP1, PBP1, the Hsp70 chaperone SSA1, and TPA1. Interacts with PAT1 in an RNA-dependent manner.

Its subcellular location is the cytoplasm. The protein localises to the nucleus. Its function is as follows. Binds the poly(A) tail of mRNA. Appears to be an important mediator of the multiple roles of the poly(A) tail in mRNA biogenesis, stability and translation. In the nucleus, interacts with the nuclear cleavage factor IA (CFIA), which is required for both mRNA cleavage and polyadenylation. Is also required for efficient mRNA export to the cytoplasm. Acts in concert with a poly(A)-specific nuclease (PAN) to affect poly(A) tail shortening, which may occur concomitantly with either nucleocytoplasmic mRNA transport or translational initiation. Regulates PAN activity via interaction with the stimulator PAN3 or the inhibitor PBP1. In the cytoplasm, affects both translation and mRNA decay. Stimulates translation by interaction with translation initiation factor eIF4G, a subunit of the cap-binding complex eIF4F, bringing the 5'- and 3'-ends of the mRNA in proximity. The formation of this circular mRNP structure appears to be critical for the synergistic effects of the cap and the poly(A) tail in facilitating translation initiation, recycling of ribosomes, and mRNA stability. Also regulates translation termination by recruiting eukaryotic release factor 3 (eRF3). Interaction with eRF3 is also required for regulation of normal mRNA decay through translation termination-coupled poly(A) shortening, probably mediated by PAN. Loss of PAB1 from the mRNP after deadenylation triggers mRNA degradation. Inhibits the major cytoplasmic mRNA deadenylase CCR4-NOT complex. Is also associated peripherally with COPI vesicles through its interaction with ARF1, and this is required for correct localization of the asymmetrically distributed ASH1 mRNA. This chain is Polyadenylate-binding protein, cytoplasmic and nuclear (PAB1), found in Saccharomyces cerevisiae (strain ATCC 204508 / S288c) (Baker's yeast).